The following is a 307-amino-acid chain: Ribonuclease Z (307 aa).

Residues His63, His65, Asp67, His68, His141, Asp212, and His270 each coordinate Zn(2+). Residue Asp67 is the Proton acceptor of the active site.

The protein belongs to the RNase Z family. As to quaternary structure, homodimer. It depends on Zn(2+) as a cofactor.

The catalysed reaction is Endonucleolytic cleavage of RNA, removing extra 3' nucleotides from tRNA precursor, generating 3' termini of tRNAs. A 3'-hydroxy group is left at the tRNA terminus and a 5'-phosphoryl group is left at the trailer molecule.. Functionally, zinc phosphodiesterase, which displays some tRNA 3'-processing endonuclease activity. Probably involved in tRNA maturation, by removing a 3'-trailer from precursor tRNA. The polypeptide is Ribonuclease Z (Bacillus cereus (strain ATCC 10987 / NRS 248)).